Here is a 60-residue protein sequence, read N- to C-terminus: Large ribosomal subunit protein uL30 (60 aa).

The protein belongs to the universal ribosomal protein uL30 family. As to quaternary structure, part of the 50S ribosomal subunit.

The chain is Large ribosomal subunit protein uL30 from Flavobacterium johnsoniae (strain ATCC 17061 / DSM 2064 / JCM 8514 / BCRC 14874 / CCUG 350202 / NBRC 14942 / NCIMB 11054 / UW101) (Cytophaga johnsonae).